The following is a 132-amino-acid chain: ATP synthase epsilon chain (132 aa).

This sequence belongs to the ATPase epsilon chain family. F-type ATPases have 2 components, CF(1) - the catalytic core - and CF(0) - the membrane proton channel. CF(1) has five subunits: alpha(3), beta(3), gamma(1), delta(1), epsilon(1). CF(0) has three main subunits: a, b and c.

It is found in the cell inner membrane. In terms of biological role, produces ATP from ADP in the presence of a proton gradient across the membrane. The protein is ATP synthase epsilon chain of Gloeobacter violaceus (strain ATCC 29082 / PCC 7421).